A 597-amino-acid chain; its full sequence is Arginine--tRNA ligase (597 aa).

A 'HIGH' region motif is present at residues 125 to 135 (PNTNKPLHLGH).

Belongs to the class-I aminoacyl-tRNA synthetase family. In terms of assembly, monomer.

The protein localises to the cytoplasm. The catalysed reaction is tRNA(Arg) + L-arginine + ATP = L-arginyl-tRNA(Arg) + AMP + diphosphate. This Bacteroides thetaiotaomicron (strain ATCC 29148 / DSM 2079 / JCM 5827 / CCUG 10774 / NCTC 10582 / VPI-5482 / E50) protein is Arginine--tRNA ligase.